Reading from the N-terminus, the 314-residue chain is tRNA dimethylallyltransferase 2 (314 aa).

8 to 15 (GPTGTGKS) serves as a coordination point for ATP. Residue 10–15 (TGTGKS) coordinates substrate.

The protein belongs to the IPP transferase family. In terms of assembly, monomer. Mg(2+) serves as cofactor.

It catalyses the reaction adenosine(37) in tRNA + dimethylallyl diphosphate = N(6)-dimethylallyladenosine(37) in tRNA + diphosphate. Its function is as follows. Catalyzes the transfer of a dimethylallyl group onto the adenine at position 37 in tRNAs that read codons beginning with uridine, leading to the formation of N6-(dimethylallyl)adenosine (i(6)A). This chain is tRNA dimethylallyltransferase 2, found in Mycobacterium ulcerans (strain Agy99).